Reading from the N-terminus, the 180-residue chain is UPF0227 protein PC1_2487 (180 aa).

The protein belongs to the UPF0227 family.

The sequence is that of UPF0227 protein PC1_2487 from Pectobacterium carotovorum subsp. carotovorum (strain PC1).